A 310-amino-acid chain; its full sequence is Protein-L-isoaspartate O-methyltransferase (310 aa).

Disordered stretches follow at residues 1-44 (MSGE…DKPA) and 67-88 (AKPATAPKPTAPKPALPKPAAP). The segment covering 14 to 29 (EDLKRAPRKSEGRPGE) has biased composition (basic and acidic residues). Residues 32-44 (AAGAVPKAADKPA) are compositionally biased toward low complexity. Positions 75 to 86 (PTAPKPALPKPA) are enriched in pro residues. S157 is a catalytic residue.

This sequence belongs to the methyltransferase superfamily. L-isoaspartyl/D-aspartyl protein methyltransferase family.

It is found in the cytoplasm. It catalyses the reaction [protein]-L-isoaspartate + S-adenosyl-L-methionine = [protein]-L-isoaspartate alpha-methyl ester + S-adenosyl-L-homocysteine. In terms of biological role, catalyzes the methyl esterification of L-isoaspartyl residues in peptides and proteins that result from spontaneous decomposition of normal L-aspartyl and L-asparaginyl residues. It plays a role in the repair and/or degradation of damaged proteins. This chain is Protein-L-isoaspartate O-methyltransferase, found in Burkholderia orbicola (strain MC0-3).